A 395-amino-acid chain; its full sequence is Elongation factor Tu (395 aa).

The tr-type G domain occupies lysine 10–glutamate 204. Residues glycine 19–threonine 26 form a G1 region. GTP is bound at residue glycine 19–threonine 26. Residue threonine 26 participates in Mg(2+) binding. The G2 stretch occupies residues glycine 60–serine 64. Residues aspartate 81–glycine 84 form a G3 region. GTP is bound by residues aspartate 81–histidine 85 and asparagine 136–aspartate 139. Residues asparagine 136–aspartate 139 are G4. A G5 region spans residues serine 174–leucine 176.

It belongs to the TRAFAC class translation factor GTPase superfamily. Classic translation factor GTPase family. EF-Tu/EF-1A subfamily. In terms of assembly, monomer.

The protein resides in the cytoplasm. It catalyses the reaction GTP + H2O = GDP + phosphate + H(+). Functionally, GTP hydrolase that promotes the GTP-dependent binding of aminoacyl-tRNA to the A-site of ribosomes during protein biosynthesis. This chain is Elongation factor Tu, found in Oceanobacillus iheyensis (strain DSM 14371 / CIP 107618 / JCM 11309 / KCTC 3954 / HTE831).